The primary structure comprises 232 residues: LexA repressor (232 aa).

A DNA-binding region (H-T-H motif) is located at residues 26–46; sequence FDEMKDALDLRSKSGIHRLIT. Active-site for autocatalytic cleavage activity residues include S153 and K191.

This sequence belongs to the peptidase S24 family. As to quaternary structure, homodimer.

The catalysed reaction is Hydrolysis of Ala-|-Gly bond in repressor LexA.. In terms of biological role, represses a number of genes involved in the response to DNA damage (SOS response), including recA and lexA. In the presence of single-stranded DNA, RecA interacts with LexA causing an autocatalytic cleavage which disrupts the DNA-binding part of LexA, leading to derepression of the SOS regulon and eventually DNA repair. The polypeptide is LexA repressor (Bradyrhizobium sp. (strain BTAi1 / ATCC BAA-1182)).